The primary structure comprises 209 residues: Thymidine kinase (209 aa).

ATP-binding positions include 9–16 (SAMNAGKT) and 88–91 (DEAQ). The Proton acceptor role is filled by glutamate 89.

It belongs to the thymidine kinase family. In terms of assembly, homotetramer.

It is found in the cytoplasm. It catalyses the reaction thymidine + ATP = dTMP + ADP + H(+). This Xanthomonas campestris pv. campestris (strain 8004) protein is Thymidine kinase.